Consider the following 80-residue polypeptide: Putative ATP-dependent Clp protease proteolytic subunit (80 aa).

Residue histidine 19 is part of the active site.

Belongs to the peptidase S14 family. As to quaternary structure, component of the chloroplastic Clp protease core complex.

The protein localises to the plastid. It localises to the chloroplast. It carries out the reaction Hydrolysis of proteins to small peptides in the presence of ATP and magnesium. alpha-casein is the usual test substrate. In the absence of ATP, only oligopeptides shorter than five residues are hydrolyzed (such as succinyl-Leu-Tyr-|-NHMec, and Leu-Tyr-Leu-|-Tyr-Trp, in which cleavage of the -Tyr-|-Leu- and -Tyr-|-Trp bonds also occurs).. Functionally, cleaves peptides in various proteins in a process that requires ATP hydrolysis. Has a chymotrypsin-like activity. Plays a major role in the degradation of misfolded proteins. The protein is Putative ATP-dependent Clp protease proteolytic subunit of Pinus strobus (Eastern white pine).